The sequence spans 61 residues: MAQLKITLTRSAAHRLPKQRKIVKELGLARVNSSVIKPDNAATRGAIFQISHLVSVEEIKD.

The protein belongs to the universal ribosomal protein uL30 family. Part of the 50S ribosomal subunit.

In Lacticaseibacillus casei (strain BL23) (Lactobacillus casei), this protein is Large ribosomal subunit protein uL30.